The primary structure comprises 424 residues: UDP-N-acetylglucosamine 1-carboxyvinyltransferase (424 aa).

22–23 contributes to the phosphoenolpyruvate binding site; it reads KN. Arginine 93 contributes to the UDP-N-acetyl-alpha-D-glucosamine binding site. Cysteine 117 serves as the catalytic Proton donor. 2-(S-cysteinyl)pyruvic acid O-phosphothioketal is present on cysteine 117. Residues 122 to 126, aspartate 307, and isoleucine 329 contribute to the UDP-N-acetyl-alpha-D-glucosamine site; that span reads RPIDL.

It belongs to the EPSP synthase family. MurA subfamily.

It is found in the cytoplasm. It catalyses the reaction phosphoenolpyruvate + UDP-N-acetyl-alpha-D-glucosamine = UDP-N-acetyl-3-O-(1-carboxyvinyl)-alpha-D-glucosamine + phosphate. Its pathway is cell wall biogenesis; peptidoglycan biosynthesis. Cell wall formation. Adds enolpyruvyl to UDP-N-acetylglucosamine. The protein is UDP-N-acetylglucosamine 1-carboxyvinyltransferase of Chlorobium phaeovibrioides (strain DSM 265 / 1930) (Prosthecochloris vibrioformis (strain DSM 265)).